A 259-amino-acid polypeptide reads, in one-letter code: Indole-3-glycerol phosphate synthase (259 aa).

It belongs to the TrpC family.

The enzyme catalyses 1-(2-carboxyphenylamino)-1-deoxy-D-ribulose 5-phosphate + H(+) = (1S,2R)-1-C-(indol-3-yl)glycerol 3-phosphate + CO2 + H2O. Its pathway is amino-acid biosynthesis; L-tryptophan biosynthesis; L-tryptophan from chorismate: step 4/5. The protein is Indole-3-glycerol phosphate synthase of Dehalococcoides mccartyi (strain ATCC BAA-2100 / JCM 16839 / KCTC 5957 / BAV1).